The sequence spans 559 residues: Dihydroxy-acid dehydratase (559 aa).

Residue Cys-49 participates in [2Fe-2S] cluster binding. Asp-81 is a Mg(2+) binding site. Cys-122 serves as a coordination point for [2Fe-2S] cluster. Residues Asp-123 and Lys-124 each contribute to the Mg(2+) site. Lys-124 carries the post-translational modification N6-carboxylysine. Residue Cys-194 participates in [2Fe-2S] cluster binding. Residue Glu-446 participates in Mg(2+) binding. The active-site Proton acceptor is the Ser-472.

It belongs to the IlvD/Edd family. As to quaternary structure, homodimer. Requires [2Fe-2S] cluster as cofactor. Mg(2+) is required as a cofactor.

The catalysed reaction is (2R)-2,3-dihydroxy-3-methylbutanoate = 3-methyl-2-oxobutanoate + H2O. The enzyme catalyses (2R,3R)-2,3-dihydroxy-3-methylpentanoate = (S)-3-methyl-2-oxopentanoate + H2O. The protein operates within amino-acid biosynthesis; L-isoleucine biosynthesis; L-isoleucine from 2-oxobutanoate: step 3/4. Its pathway is amino-acid biosynthesis; L-valine biosynthesis; L-valine from pyruvate: step 3/4. In terms of biological role, functions in the biosynthesis of branched-chain amino acids. Catalyzes the dehydration of (2R,3R)-2,3-dihydroxy-3-methylpentanoate (2,3-dihydroxy-3-methylvalerate) into 2-oxo-3-methylpentanoate (2-oxo-3-methylvalerate) and of (2R)-2,3-dihydroxy-3-methylbutanoate (2,3-dihydroxyisovalerate) into 2-oxo-3-methylbutanoate (2-oxoisovalerate), the penultimate precursor to L-isoleucine and L-valine, respectively. This Prochlorococcus marinus subsp. pastoris (strain CCMP1986 / NIES-2087 / MED4) protein is Dihydroxy-acid dehydratase.